Reading from the N-terminus, the 223-residue chain is MKFAVIQFPGSNCDFDLLWAIRDVMGAEAEFVWHDEKSLAGFDGVLIPGGFSYGDYLRCGAIASFANIMPEIKRLAKEGKPVFGTCNGFQILVESGLLPGVLIRNEGLKFVSKWQALKVENNQSNFTTEYAKDALINLPIAHGEGQYVADEAQLAELKANGQIIFTYADENPNGSVENIAGIVNKEGNVLGMMPHPERAMEELLGGADGVDLFASVLKNFVGK.

The 222-residue stretch at 2-223 (KFAVIQFPGS…ASVLKNFVGK (222 aa)) folds into the Glutamine amidotransferase type-1 domain. C86 acts as the Nucleophile in catalysis. Catalysis depends on residues H195 and E197.

As to quaternary structure, part of the FGAM synthase complex composed of 1 PurL, 1 PurQ and 2 PurS subunits.

It localises to the cytoplasm. It catalyses the reaction N(2)-formyl-N(1)-(5-phospho-beta-D-ribosyl)glycinamide + L-glutamine + ATP + H2O = 2-formamido-N(1)-(5-O-phospho-beta-D-ribosyl)acetamidine + L-glutamate + ADP + phosphate + H(+). The catalysed reaction is L-glutamine + H2O = L-glutamate + NH4(+). It participates in purine metabolism; IMP biosynthesis via de novo pathway; 5-amino-1-(5-phospho-D-ribosyl)imidazole from N(2)-formyl-N(1)-(5-phospho-D-ribosyl)glycinamide: step 1/2. Functionally, part of the phosphoribosylformylglycinamidine synthase complex involved in the purines biosynthetic pathway. Catalyzes the ATP-dependent conversion of formylglycinamide ribonucleotide (FGAR) and glutamine to yield formylglycinamidine ribonucleotide (FGAM) and glutamate. The FGAM synthase complex is composed of three subunits. PurQ produces an ammonia molecule by converting glutamine to glutamate. PurL transfers the ammonia molecule to FGAR to form FGAM in an ATP-dependent manner. PurS interacts with PurQ and PurL and is thought to assist in the transfer of the ammonia molecule from PurQ to PurL. The polypeptide is Phosphoribosylformylglycinamidine synthase subunit PurQ (Lactococcus lactis subsp. lactis (strain IL1403) (Streptococcus lactis)).